The chain runs to 1082 residues: SURP and G-patch domain-containing protein 2 (1082 aa).

The residue at position 7 (Thr7) is a Phosphothreonine. The disordered stretch occupies residues 65–97 (LSGSVAHSRDAGREGLRSDVFPGPSFRSSNPSI). Basic and acidic residues predominate over residues 71–81 (HSRDAGREGLR). 2 positions are modified to phosphoserine: Ser96 and Ser224. A Glycyl lysine isopeptide (Lys-Gly) (interchain with G-Cter in SUMO2) cross-link involves residue Lys228. A Phosphothreonine modification is found at Thr275. Ser277 bears the Phosphoserine mark. A Glycyl lysine isopeptide (Lys-Gly) (interchain with G-Cter in SUMO2) cross-link involves residue Lys305. Phosphoserine is present on residues Ser315, Ser573, and Ser603. The stretch at 590-633 (IDQLVKRVIEGSLSPKERTLLKEDPAYWFLSDENSLEYKYYKLK) is one SURP motif 1 repeat. Residue Lys650 forms a Glycyl lysine isopeptide (Lys-Gly) (interchain with G-Cter in SUMO2) linkage. Residues 694–779 (RRATTGTQTL…QTSSPCPSAD (86 aa)) form a disordered region. Over residues 697–708 (TTGTQTLLSSGT) the composition is skewed to low complexity. Residues 727-738 (LPDRNDAAKDCP) show a composition bias toward basic and acidic residues. Phosphoserine is present on residues Ser754 and Ser757. An SURP motif 2 repeat occupies 787 to 830 (TAEKLARFVAQVGPEIEQFSIENSTDNPDLWFLHDQNSSAFKFY). Disordered regions lie at residues 849–930 (NLHT…EAAE), 982–1002 (RIAY…PKDL), and 1030–1061 (LGSL…EHKE). Position 863 is a phosphoserine (Ser863). 2 stretches are compositionally biased toward acidic residues: residues 868-877 (MEGEAEFEDE) and 885-904 (LESP…DGGE). Over residues 990 to 999 (GRPMSKKKKP) the composition is skewed to basic residues. The Nuclear localization signal signature appears at 995-1000 (KKKKPK). Residues 1011-1057 (DKNLGFQMLQKMGWKEGHGLGSLGKGIREPVSVGTPSEGEGLGADGQ) enclose the G-patch domain.

As to expression, detected in adult testis, and in fetal brain and kidney.

It is found in the nucleus. Functionally, may play a role in mRNA splicing. The sequence is that of SURP and G-patch domain-containing protein 2 (SUGP2) from Homo sapiens (Human).